We begin with the raw amino-acid sequence, 219 residues long: MALDIKICGLKTDQAMAAALGGGASHVGFIFFAKSPRYVEPAEAGRLREAARGKAVAVAVTVDATDAFLDEIVSAMQPDMLQLHGSEHPERVAELKARYGLPVMKALPLSEAADLDRIRPFIGIADRFLFDAKPPKGSELPGGNGVAFDWRILAGLDAGVDYMLSGGLNAANIGDALRLANPPGIDISSGVESAPGVKDPALIEQFFRAVRAARDDRAA.

This sequence belongs to the TrpF family.

The catalysed reaction is N-(5-phospho-beta-D-ribosyl)anthranilate = 1-(2-carboxyphenylamino)-1-deoxy-D-ribulose 5-phosphate. It functions in the pathway amino-acid biosynthesis; L-tryptophan biosynthesis; L-tryptophan from chorismate: step 3/5. The polypeptide is N-(5'-phosphoribosyl)anthranilate isomerase (Mesorhizobium japonicum (strain LMG 29417 / CECT 9101 / MAFF 303099) (Mesorhizobium loti (strain MAFF 303099))).